A 329-amino-acid chain; its full sequence is tRNA dimethylallyltransferase (329 aa).

Gly-12–Thr-19 lines the ATP pocket. A substrate-binding site is contributed by Thr-14–Thr-19. Residues Asp-37–Tyr-40 form an interaction with substrate tRNA region. The tract at residues Leu-306–Ala-329 is disordered. The segment covering Ser-320–Ala-329 has biased composition (gly residues).

It belongs to the IPP transferase family. As to quaternary structure, monomer. Mg(2+) serves as cofactor.

It carries out the reaction adenosine(37) in tRNA + dimethylallyl diphosphate = N(6)-dimethylallyladenosine(37) in tRNA + diphosphate. Catalyzes the transfer of a dimethylallyl group onto the adenine at position 37 in tRNAs that read codons beginning with uridine, leading to the formation of N6-(dimethylallyl)adenosine (i(6)A). In Thermomicrobium roseum (strain ATCC 27502 / DSM 5159 / P-2), this protein is tRNA dimethylallyltransferase.